The sequence spans 289 residues: ATP synthase gamma chain (289 aa).

The protein belongs to the ATPase gamma chain family. In terms of assembly, F-type ATPases have 2 components, CF(1) - the catalytic core - and CF(0) - the membrane proton channel. CF(1) has five subunits: alpha(3), beta(3), gamma(1), delta(1), epsilon(1). CF(0) has three main subunits: a, b and c.

Its subcellular location is the cell inner membrane. Its function is as follows. Produces ATP from ADP in the presence of a proton gradient across the membrane. The gamma chain is believed to be important in regulating ATPase activity and the flow of protons through the CF(0) complex. This is ATP synthase gamma chain from Leptospira biflexa serovar Patoc (strain Patoc 1 / ATCC 23582 / Paris).